The chain runs to 419 residues: Copalyl diphosphate synthase 2, chloroplastic (419 aa).

Lysine 82 provides a ligand contact to substrate.

The protein belongs to the terpene synthase family. Tpsc subfamily. Requires Mg(2+) as cofactor. In terms of tissue distribution, ubiquitous expression in roots, stems, leaves and flowers.

Its subcellular location is the plastid. It is found in the chloroplast. The enzyme catalyses (2E,6E,10E)-geranylgeranyl diphosphate = (+)-copalyl diphosphate. Its pathway is secondary metabolite biosynthesis; terpenoid biosynthesis. In terms of biological role, involved in the biosynthesis of ent-kaurene diterpenoids natural products such as oridonin, miltiradiene, eriocalyxin B and nezukol, known to exhibit antitumor, anti-inflammatory and antibacterial activities. Catalyzes the conversion of (2E,6E,10E)-geranylgeranyl diphosphate (GGPP) to (+)-copalyl diphosphate ((+)-CPP). The polypeptide is Copalyl diphosphate synthase 2, chloroplastic (Isodon rubescens (Rabdosia rubescens)).